We begin with the raw amino-acid sequence, 307 residues long: Ribonuclease Z (307 aa).

His63, His65, Asp67, His68, His140, Asp211, and His269 together coordinate Zn(2+). The Proton acceptor role is filled by Asp67.

Belongs to the RNase Z family. As to quaternary structure, homodimer. Zn(2+) is required as a cofactor.

It carries out the reaction Endonucleolytic cleavage of RNA, removing extra 3' nucleotides from tRNA precursor, generating 3' termini of tRNAs. A 3'-hydroxy group is left at the tRNA terminus and a 5'-phosphoryl group is left at the trailer molecule.. Zinc phosphodiesterase, which displays some tRNA 3'-processing endonuclease activity. Probably involved in tRNA maturation, by removing a 3'-trailer from precursor tRNA. The protein is Ribonuclease Z of Geobacillus kaustophilus (strain HTA426).